Here is a 201-residue protein sequence, read N- to C-terminus: Probable thymidylate kinase (201 aa).

An ATP-binding site is contributed by Gly-10 to Ser-17.

The protein belongs to the thymidylate kinase family.

The enzyme catalyses dTMP + ATP = dTDP + ADP. This is Probable thymidylate kinase from Methanococcoides burtonii (strain DSM 6242 / NBRC 107633 / OCM 468 / ACE-M).